We begin with the raw amino-acid sequence, 389 residues long: MSRSVLVLNSGSSSVKYAVLEPDSGVLVADGIVERIGEEGAERAVTDHAAAMQVVFDSLASDGHRLDDLGLVAVGHRVVHGGQDLYRPTVVDDATIARLKELSPLAPLHNPPAILGIEVARKALPDLPHVAVFDTAFFHDLPPAAATYAIDAEVAGSWHIRRYGFHGTSHQYVSEQAAAFLNVPLESLSQIVLHLGNGASASAILGGRPVETSMGLTPMEGLVMGTRSGDVDPGVIFYLWRTAGMSVEDIEAMLNRRSGVRGLGGEIDFRVLHQRIESGDAAAQLAYDVYIHRLRKYVGAYLATLGSVDVITFTAGVGENDAAVRRDVLSGLTAFGIELDEHLNASPARTARRISPDGAPITVLVVPTNEELAIARACAGVLGGRLGHG.

Asparagine 9 contacts Mg(2+). Position 16 (lysine 16) interacts with ATP. Arginine 77 contributes to the substrate binding site. Aspartate 134 serves as the catalytic Proton donor/acceptor. ATP contacts are provided by residues 194-198 (HLGNG), 268-270 (DFR), and 316-320 (GVGEN). A Mg(2+)-binding site is contributed by glutamate 370.

The protein belongs to the acetokinase family. Homodimer. Mg(2+) is required as a cofactor. It depends on Mn(2+) as a cofactor.

Its subcellular location is the cytoplasm. The enzyme catalyses acetate + ATP = acetyl phosphate + ADP. The protein operates within metabolic intermediate biosynthesis; acetyl-CoA biosynthesis; acetyl-CoA from acetate: step 1/2. Functionally, catalyzes the formation of acetyl phosphate from acetate and ATP. Can also catalyze the reverse reaction. This Mycolicibacterium vanbaalenii (strain DSM 7251 / JCM 13017 / BCRC 16820 / KCTC 9966 / NRRL B-24157 / PYR-1) (Mycobacterium vanbaalenii) protein is Acetate kinase.